The following is a 696-amino-acid chain: Ribonucleoside-diphosphate reductase subunit beta (696 aa).

Positions 97, 127, and 130 each coordinate Fe cation. Tyr-134 is an active-site residue. Fe cation contacts are provided by Glu-194 and Glu-228. A DOD-type homing endonuclease domain is found at 377-507 (DGTIDSKRNG…FVQALCALGG (131 aa)). His-577 contributes to the Fe cation binding site.

The protein belongs to the ribonucleoside diphosphate reductase small chain family. In terms of assembly, tetramer of two alpha and two beta subunits. Requires Fe cation as cofactor. In terms of processing, this protein undergoes a protein self splicing that involves a post-translational excision of the intervening region (intein) followed by peptide ligation.

It catalyses the reaction a 2'-deoxyribonucleoside 5'-diphosphate + [thioredoxin]-disulfide + H2O = a ribonucleoside 5'-diphosphate + [thioredoxin]-dithiol. In terms of biological role, provides the precursors necessary for DNA synthesis. Catalyzes the biosynthesis of deoxyribonucleotides from the corresponding ribonucleotides. This Aquifex aeolicus (strain VF5) protein is Ribonucleoside-diphosphate reductase subunit beta (nrdB).